The chain runs to 389 residues: 8-amino-7-oxononanoate synthase (389 aa).

Substrate is bound at residue Arg-23. Pyridoxal 5'-phosphate is bound at residue Gly-114–Tyr-115. His-139 is a substrate binding site. The pyridoxal 5'-phosphate site is built by Ser-185, His-213, and Thr-242. Residue Lys-245 is modified to N6-(pyridoxal phosphate)lysine. A substrate-binding site is contributed by Thr-357.

This sequence belongs to the class-II pyridoxal-phosphate-dependent aminotransferase family. BioF subfamily. In terms of assembly, homodimer. It depends on pyridoxal 5'-phosphate as a cofactor.

It carries out the reaction 6-carboxyhexanoyl-[ACP] + L-alanine + H(+) = (8S)-8-amino-7-oxononanoate + holo-[ACP] + CO2. It functions in the pathway cofactor biosynthesis; biotin biosynthesis. In terms of biological role, catalyzes the decarboxylative condensation of pimeloyl-[acyl-carrier protein] and L-alanine to produce 8-amino-7-oxononanoate (AON), [acyl-carrier protein], and carbon dioxide. This is 8-amino-7-oxononanoate synthase from Acidithiobacillus ferrooxidans (strain ATCC 23270 / DSM 14882 / CIP 104768 / NCIMB 8455) (Ferrobacillus ferrooxidans (strain ATCC 23270)).